A 245-amino-acid polypeptide reads, in one-letter code: 1-(5-phosphoribosyl)-5-[(5-phosphoribosylamino)methylideneamino] imidazole-4-carboxamide isomerase (245 aa).

Aspartate 8 (proton acceptor) is an active-site residue. Aspartate 130 (proton donor) is an active-site residue.

The protein belongs to the HisA/HisF family.

It localises to the cytoplasm. The catalysed reaction is 1-(5-phospho-beta-D-ribosyl)-5-[(5-phospho-beta-D-ribosylamino)methylideneamino]imidazole-4-carboxamide = 5-[(5-phospho-1-deoxy-D-ribulos-1-ylimino)methylamino]-1-(5-phospho-beta-D-ribosyl)imidazole-4-carboxamide. It participates in amino-acid biosynthesis; L-histidine biosynthesis; L-histidine from 5-phospho-alpha-D-ribose 1-diphosphate: step 4/9. The sequence is that of 1-(5-phosphoribosyl)-5-[(5-phosphoribosylamino)methylideneamino] imidazole-4-carboxamide isomerase from Pseudomonas savastanoi pv. phaseolicola (strain 1448A / Race 6) (Pseudomonas syringae pv. phaseolicola (strain 1448A / Race 6)).